A 152-amino-acid chain; its full sequence is Acidic phospholipase A2 S16-19 (152 aa).

The first 19 residues, 1 to 19 (MYPAHLLVLLAVCVSLLGA), serve as a signal peptide directing secretion. The propeptide occupies 20 to 27 (SNIPLPSL). 6 disulfides stabilise this stretch: cysteine 38–cysteine 104, cysteine 54–cysteine 151, cysteine 71–cysteine 132, cysteine 78–cysteine 125, cysteine 88–cysteine 118, and cysteine 111–cysteine 123. Residues tyrosine 55, glycine 57, and glycine 59 each contribute to the Ca(2+) site. The active site involves histidine 75. A Ca(2+)-binding site is contributed by aspartate 76. The active site involves aspartate 126.

The protein belongs to the phospholipase A2 family. Group I subfamily. D49 sub-subfamily. Requires Ca(2+) as cofactor. This enzyme lacks one of the seven disulfide bonds found in similar PLA2 proteins. As to expression, expressed by the venom gland.

It localises to the secreted. The enzyme catalyses a 1,2-diacyl-sn-glycero-3-phosphocholine + H2O = a 1-acyl-sn-glycero-3-phosphocholine + a fatty acid + H(+). Its function is as follows. Snake venom phospholipase A2 (PLA2) that inhibits collagen-induced platelet aggregation. PLA2 catalyzes the calcium-dependent hydrolysis of the 2-acyl groups in 3-sn-phosphoglycerides. The polypeptide is Acidic phospholipase A2 S16-19 (Austrelaps superbus (Lowland copperhead snake)).